A 333-amino-acid polypeptide reads, in one-letter code: T-cell surface glycoprotein CD1b-1 (333 aa).

The first 18 residues, 1 to 18 (MLLLPLLLLAVIVPGGDN), serve as a signal peptide directing secretion. Topologically, residues 19–302 (EDVFQGPTSF…LYWGHPTSTG (284 aa)) are extracellular. Residues Asn-38, Asn-75, Asn-146, and Asn-258 are each glycosylated (N-linked (GlcNAc...) asparagine). 2 cysteine pairs are disulfide-bonded: Cys-120–Cys-184 and Cys-224–Cys-279. An Ig-like domain is found at 185–295 (PRYFLSVLDA…LGDQDIVLYW (111 aa)). Residues 303 to 323 (LIFVAIIVSSLILLICLALWF) form a helical membrane-spanning segment. Residues 324-333 (WRRWSYLTIL) are Cytoplasmic-facing. Positions 329–332 (YLTI) match the Internalization signal motif.

Heterodimer with B2M (beta-2-microglobulin). Interacts with saposin C.

It is found in the cell membrane. Its subcellular location is the endosome membrane. The protein localises to the lysosome membrane. Antigen-presenting protein that binds self and non-self lipid and glycolipid antigens and presents them to T-cell receptors on natural killer T-cells. The chain is T-cell surface glycoprotein CD1b-1 from Ovis aries (Sheep).